The primary structure comprises 197 residues: Large ribosomal subunit protein uL10 (197 aa).

The segment at 163–197 (GAPAAAEAPAAEESADSAAEAAAEAPAEAPAAEEN) is disordered.

This sequence belongs to the universal ribosomal protein uL10 family. As to quaternary structure, part of the ribosomal stalk of the 50S ribosomal subunit. The N-terminus interacts with L11 and the large rRNA to form the base of the stalk. The C-terminus forms an elongated spine to which L12 dimers bind in a sequential fashion forming a multimeric L10(L12)X complex.

In terms of biological role, forms part of the ribosomal stalk, playing a central role in the interaction of the ribosome with GTP-bound translation factors. In Pseudarthrobacter chlorophenolicus (strain ATCC 700700 / DSM 12829 / CIP 107037 / JCM 12360 / KCTC 9906 / NCIMB 13794 / A6) (Arthrobacter chlorophenolicus), this protein is Large ribosomal subunit protein uL10.